The sequence spans 336 residues: UDP-N-acetylenolpyruvoylglucosamine reductase (336 aa).

One can recognise an FAD-binding PCMH-type domain in the interval 17–188 (GFDVRARYAS…TAVTLRLSRD (172 aa)). Residue arginine 164 is part of the active site. The active-site Proton donor is the serine 236. The active site involves glutamate 332.

This sequence belongs to the MurB family. It depends on FAD as a cofactor.

It is found in the cytoplasm. The catalysed reaction is UDP-N-acetyl-alpha-D-muramate + NADP(+) = UDP-N-acetyl-3-O-(1-carboxyvinyl)-alpha-D-glucosamine + NADPH + H(+). It participates in cell wall biogenesis; peptidoglycan biosynthesis. Cell wall formation. The chain is UDP-N-acetylenolpyruvoylglucosamine reductase from Cupriavidus pinatubonensis (strain JMP 134 / LMG 1197) (Cupriavidus necator (strain JMP 134)).